The chain runs to 66 residues: Large ribosomal subunit protein bL35 (66 aa).

Positions Met-1 to His-26 are enriched in basic residues. A disordered region spans residues Met-1–Arg-45.

The protein belongs to the bacterial ribosomal protein bL35 family.

This Bacillus velezensis (strain DSM 23117 / BGSC 10A6 / LMG 26770 / FZB42) (Bacillus amyloliquefaciens subsp. plantarum) protein is Large ribosomal subunit protein bL35.